The chain runs to 315 residues: Cobalamin biosynthesis protein CobD (315 aa).

Helical transmembrane passes span 48-68, 77-97, 150-170, 200-220, and 295-315; these read IAGF…TLGI, PILG…AKGL, DGII…AFLY, VFNY…SFIL, and MVSF…EVII.

The protein belongs to the CobD/CbiB family.

The protein resides in the cell membrane. Its pathway is cofactor biosynthesis; adenosylcobalamin biosynthesis. Converts cobyric acid to cobinamide by the addition of aminopropanol on the F carboxylic group. This chain is Cobalamin biosynthesis protein CobD, found in Clostridium perfringens (strain 13 / Type A).